A 348-amino-acid polypeptide reads, in one-letter code: MNGTEGPNFYVPFSNKTGVVRSPFEEPQYYLAEPWQFSCLAAYMFMLIVLGFPINFLTLYVTIQHKKLRTPLNYILLNLAIADLFMVFGGFTTTLYTSLHGYFVFGPTGCDLEGFFATLGGEIALWSLVVLAIERYIVVCKPMSNFRFGENHAIMGVAFTWVMALACAAPPLVGWSRYIPEGMQCSCGIDYYTLKPEVNNESFVIYMFVVHFTIPMVVIFFCYGQLVFTVKEAAAQQQESATTQKAEKEVTRMVIIMVIAFLICWLPYAGVAFYIFTHQGSNFGPILMTLPAFFAKTSAVYNPVIYIMLNKQFRTCMLTTLCCGKIPLGDDEASATASKTETSQVAPA.

Met-1 carries the N-acetylmethionine modification. The Extracellular segment spans residues Met-1 to Gln-36. N-linked (GlcNAc...) asparagine glycosylation is found at Asn-2 and Asn-15. The chain crosses the membrane as a helical span at residues Phe-37–Val-61. Over Thr-62 to Asn-73 the chain is Cytoplasmic. A helical transmembrane segment spans residues Tyr-74–Tyr-96. Residues Thr-97–Cys-110 lie on the Extracellular side of the membrane. Residues Cys-110 and Cys-187 are joined by a disulfide bond. The helical transmembrane segment at Asp-111–Ile-133 threads the bilayer. A 'Ionic lock' involved in activated form stabilization motif is present at residues Glu-134–Tyr-136. Residues Glu-134–His-152 lie on the Cytoplasmic side of the membrane. A helical membrane pass occupies residues Ala-153–Val-173. Residues Gly-174 to Ser-202 lie on the Extracellular side of the membrane. Residue Glu-201 participates in Zn(2+) binding. The chain crosses the membrane as a helical span at residues Phe-203 to Gly-224. Residues Gln-225–Arg-252 lie on the Cytoplasmic side of the membrane. A helical transmembrane segment spans residues Met-253–Tyr-274. Topologically, residues Ile-275 to Ile-286 are extracellular. A Zn(2+)-binding site is contributed by Gln-279. The helical transmembrane segment at Leu-287 to Met-308 threads the bilayer. At Lys-296 the chain carries N6-(retinylidene)lysine. At Leu-309–Ala-348 the chain is on the cytoplasmic side. Residues Cys-322 and Cys-323 are each lipidated (S-palmitoyl cysteine). An interaction with SAG region spans residues Asp-330–Ala-348. Ser-334 bears the Phosphoserine mark. Thr-336 is modified (phosphothreonine). Residue Ser-338 is modified to Phosphoserine. A phosphothreonine mark is found at Thr-340 and Thr-342. Ser-343 is modified (phosphoserine).

Belongs to the G-protein coupled receptor 1 family. Opsin subfamily. As to quaternary structure, homodimer. May form a complex composed of RHO, GRK1 and RCVRN in a Ca(2+)-dependent manner; RCVRN prevents the interaction between GRK1 and RHO. Interacts with GRK1. Interacts (phosphorylated form) with SAG. Interacts with GNAT1. Interacts with GNAT3. SAG and G-proteins compete for a common binding site. Interacts with PRCD; the interaction promotes PRCD stability. Forms a complex with ASAP1 and ARF4. Forms a complex with ASAP1, RAB11A, Rabin8/RAB3IP, ARF4 and RAB11FIP3; the complex regulates Golgi-to-cilia rhodopsin/RHO transport in photoreceptors. Phosphorylated on some or all of the serine and threonine residues present in the C-terminal region. In terms of processing, contains one covalently linked retinal chromophore. Upon light absorption, the covalently bound 11-cis-retinal is converted to all-trans-retinal. After hydrolysis of the Schiff base and release of the covalently bound all-trans-retinal, active rhodopsin is regenerated by binding of a fresh molecule of 11-cis-retinal.

Its subcellular location is the membrane. The protein resides in the cell projection. It is found in the cilium. The protein localises to the photoreceptor outer segment. Photoreceptor required for image-forming vision at low light intensity. Required for photoreceptor cell viability after birth. Light-induced isomerization of 11-cis to all-trans retinal triggers a conformational change that activates signaling via G-proteins. Subsequent receptor phosphorylation mediates displacement of the bound G-protein alpha subunit by the arrestin SAG and terminates signaling. This Caluromys philander (Bare-tailed woolly opossum) protein is Rhodopsin (RHO).